The sequence spans 201 residues: Probable nicotinate-nucleotide adenylyltransferase (201 aa).

It belongs to the NadD family.

It catalyses the reaction nicotinate beta-D-ribonucleotide + ATP + H(+) = deamido-NAD(+) + diphosphate. It participates in cofactor biosynthesis; NAD(+) biosynthesis; deamido-NAD(+) from nicotinate D-ribonucleotide: step 1/1. Functionally, catalyzes the reversible adenylation of nicotinate mononucleotide (NaMN) to nicotinic acid adenine dinucleotide (NaAD). This chain is Probable nicotinate-nucleotide adenylyltransferase, found in Clostridium botulinum (strain Okra / Type B1).